Consider the following 332-residue polypeptide: 2,3-diketo-L-gulonate reductase (332 aa).

The Proton donor role is filled by H44. NAD(+) is bound by residues 168 to 174, 224 to 225, and 304 to 306; these read ITMVDMS, WK, and GHE.

The protein belongs to the LDH2/MDH2 oxidoreductase family. DlgD subfamily. As to quaternary structure, homodimer.

The protein resides in the cytoplasm. The catalysed reaction is 3-dehydro-L-gulonate + NAD(+) = 2,3-dioxo-L-gulonate + NADH + H(+). It catalyses the reaction 3-dehydro-L-gulonate + NADP(+) = 2,3-dioxo-L-gulonate + NADPH + H(+). Catalyzes the reduction of 2,3-diketo-L-gulonate in the presence of NADH, to form 3-keto-L-gulonate. The polypeptide is 2,3-diketo-L-gulonate reductase (Salmonella newport (strain SL254)).